Consider the following 322-residue polypeptide: MTSHLKKVELHCHLEGAAPPALTLAQARKYNVDTNAFMRDGVYLWKDFAEFLVCYDKVSEVYRTEEDYALLTETYLEELAGIGTIYSELIVSPDHGDRIGLGADAYMEGVSAGIRAAKEKSGIEARLIVTGERHFGPERVVKAAEYAAKSDNPLISGFNMAGEERMGRVADYARAFDIAREAGLGITIHAGEVCGAFSVADAVELVRPARIGHGVRAIEDADLVKRLADLGTVLEVCPGSNIALNVFPDFPSHPLRKLRDAGVRVTISSDDPPFFHTSLKREYELASTAFGFSDDEINAMTRTAIEAAFLDEATRAALLARL.

Zn(2+)-binding residues include His11, His13, and His189. The active-site Proton donor is Glu192. A Zn(2+)-binding site is contributed by Asp270. Asp271 is a substrate binding site.

It belongs to the metallo-dependent hydrolases superfamily. Adenosine and AMP deaminases family. Adenine deaminase type 2 subfamily. It depends on Zn(2+) as a cofactor.

The enzyme catalyses adenine + H2O + H(+) = hypoxanthine + NH4(+). Catalyzes the hydrolytic deamination of adenine to hypoxanthine. Plays an important role in the purine salvage pathway and in nitrogen catabolism. The polypeptide is Adenine deaminase (Rhizobium rhizogenes (strain K84 / ATCC BAA-868) (Agrobacterium radiobacter)).